The sequence spans 225 residues: Orotate phosphoribosyltransferase (225 aa).

Residues K26, 73–74 (YK), R100, K101, K104, H106, and 127–135 (EDVTTAGTS) each bind 5-phospho-alpha-D-ribose 1-diphosphate. T131 and R160 together coordinate orotate.

The protein belongs to the purine/pyrimidine phosphoribosyltransferase family. PyrE subfamily. As to quaternary structure, homodimer. Mg(2+) is required as a cofactor.

It carries out the reaction orotidine 5'-phosphate + diphosphate = orotate + 5-phospho-alpha-D-ribose 1-diphosphate. It functions in the pathway pyrimidine metabolism; UMP biosynthesis via de novo pathway; UMP from orotate: step 1/2. Catalyzes the transfer of a ribosyl phosphate group from 5-phosphoribose 1-diphosphate to orotate, leading to the formation of orotidine monophosphate (OMP). In Lachnoclostridium phytofermentans (strain ATCC 700394 / DSM 18823 / ISDg) (Clostridium phytofermentans), this protein is Orotate phosphoribosyltransferase.